The chain runs to 58 residues: Light-harvesting protein B-870 alpha chain (58 aa).

At 1-15 (MSKFYKIWLVFDPRR) the chain is on the cytoplasmic side. A helical transmembrane segment spans residues 16–36 (VFVAQGVFLFLLAVLIHLILL). An a bacteriochlorophyll-binding site is contributed by histidine 32. Topologically, residues 37–58 (STPAFNWLTVATAKHGYVAAAQ) are periplasmic.

The protein belongs to the antenna complex alpha subunit family. The core complex is formed by different alpha and beta chains, binding bacteriochlorophyll molecules, and arranged most probably in tetrameric structures disposed around the reaction center. The non-pigmented gamma chains may constitute additional components.

It localises to the cell inner membrane. Antenna complexes are light-harvesting systems, which transfer the excitation energy to the reaction centers. The protein is Light-harvesting protein B-870 alpha chain (pufA) of Rhodobacter capsulatus (Rhodopseudomonas capsulata).